The primary structure comprises 172 residues: B-box zinc finger protein 18 (172 aa).

The Zn(2+) site is built by C5, C8, C28, H33, C56, C59, C79, and H84. The B box-type 1; atypical zinc finger occupies 5–47; it reads CDACESAAAIVFCAADEAALCCSCDEKVHKCNKLASRHLRVGL. A B box-type 2; atypical zinc finger spans residues 56–96; it reads CDICENAPAFFYCEIDGSSLCLQCDMVVHVGGKRTHRRFLL. The segment at 119-172 is disordered; it reads QKASSGRGQESNGNGDHDHNMIDLNSNPQRVHEPGSHNQEEGIDVNNANNHEHE. A compositionally biased stretch (polar residues) spans 120 to 132; it reads KASSGRGQESNGN. Basic and acidic residues predominate over residues 148–158; that stretch reads RVHEPGSHNQE.

Expressed in vasculature of leaves and petioles.

It localises to the nucleus. In terms of biological role, acts as a negative regulator of seedling photomorphogenesis. Acts as a negative regulator of blue light-mediated inhibition of hypocotyl elongation through increase of bioactive gibberellin levels. Acts as a repressor of thermotolerance by modulating expression of a set of heat shock-responsive genes. The protein is B-box zinc finger protein 18 of Arabidopsis thaliana (Mouse-ear cress).